The sequence spans 410 residues: Exodeoxyribonuclease 7 large subunit (410 aa).

It belongs to the XseA family. Heterooligomer composed of large and small subunits.

It localises to the cytoplasm. It catalyses the reaction Exonucleolytic cleavage in either 5'- to 3'- or 3'- to 5'-direction to yield nucleoside 5'-phosphates.. In terms of biological role, bidirectionally degrades single-stranded DNA into large acid-insoluble oligonucleotides, which are then degraded further into small acid-soluble oligonucleotides. The polypeptide is Exodeoxyribonuclease 7 large subunit (Alkaliphilus metalliredigens (strain QYMF)).